Here is a 378-residue protein sequence, read N- to C-terminus: WUSCHEL-related homeobox 9 (378 aa).

Disordered stretches follow at residues 1–60 (MASS…NPKP) and 123–173 (KHSL…GSQM). The segment covering 32–42 (SASHRSSPFSS) has biased composition (low complexity). The span at 45 to 54 (EVERSPEPKP) shows a compositional bias: basic and acidic residues. The segment at residues 51–115 (EPKPRWNPKP…NRKSRSKHKL (65 aa)) is a DNA-binding region (homeobox; WUS-type). Low complexity-rich tracts occupy residues 137–152 (PSASSSSSSSSSSSKS) and 161–171 (KNNTNLSLGGS).

Belongs to the WUS homeobox family. As to expression, expressed in the basal cell and later at the boundary between suspensor and proembryo. Expressed at low levels in proliferating tissues post embryonically. Detected in vegetative shoot apical meristem, leaf primordia, floral meristems, emerging floral organs, epidermal layer of the placenta and in the upper portion of the root meristematic zone.

It is found in the nucleus. Its subcellular location is the cytoplasm. In terms of biological role, homeodomain transcription factor required for meristem growth and early development. Promotes cell proliferation and prevents premature differentiation in meristematic tissues during postembryonic development. Essential for maintaining tissue growth during embryogenesis. May act by repressing TSS to promote meristematic proliferation. Involved in the transcriptional activation of a subset of cytokinin response factors. May act as a negative regulator of cytokinin signaling in the dark. The polypeptide is WUSCHEL-related homeobox 9 (Arabidopsis thaliana (Mouse-ear cress)).